Consider the following 284-residue polypeptide: Bifunctional protein FolD (284 aa).

Residues 166 to 168 and Ile-232 contribute to the NADP(+) site; that span reads GAS.

This sequence belongs to the tetrahydrofolate dehydrogenase/cyclohydrolase family. Homodimer.

The enzyme catalyses (6R)-5,10-methylene-5,6,7,8-tetrahydrofolate + NADP(+) = (6R)-5,10-methenyltetrahydrofolate + NADPH. It catalyses the reaction (6R)-5,10-methenyltetrahydrofolate + H2O = (6R)-10-formyltetrahydrofolate + H(+). Its pathway is one-carbon metabolism; tetrahydrofolate interconversion. Functionally, catalyzes the oxidation of 5,10-methylenetetrahydrofolate to 5,10-methenyltetrahydrofolate and then the hydrolysis of 5,10-methenyltetrahydrofolate to 10-formyltetrahydrofolate. The polypeptide is Bifunctional protein FolD (Stutzerimonas stutzeri (strain A1501) (Pseudomonas stutzeri)).